Reading from the N-terminus, the 872-residue chain is Protein SEY1 (872 aa).

The Cytoplasmic segment spans residues 1–749; the sequence is MVANGHFAGV…KRSAIGGITQ (749 aa). Positions 49–294 constitute a GB1/RHD3-type G domain; the sequence is GFNYHLISVF…IEGGIFLPEY (246 aa). 59–66 provides a ligand contact to GTP; it reads GSQSTGKS. Residues 482–504 adopt a coiled-coil conformation; that stretch reads SNYQQELSLYQKDLENIGGQLRR. The segment at 676-704 is disordered; the sequence is LDKWIGHTPSSATPADEEDLTPIGGVDED. The span at 690–704 shows a compositional bias: acidic residues; that stretch reads ADEEDLTPIGGVDED. The helical transmembrane segment at 750–770 threads the bilayer; that stretch reads VPLYFYGLLLALGWNEIVAVL. Over 771–773 the chain is Lumenal; it reads RNP. Residues 774 to 794 form a helical membrane-spanning segment; sequence AYFLLLFVCAVTAYVTYQLNL. The Cytoplasmic segment spans residues 795 to 872; that stretch reads WGPIIKMTEA…IDDADDDDDF (78 aa). Residues 849-872 form a disordered region; that stretch reads NRKSAGGFQNNRSHIDDADDDDDF.

Belongs to the TRAFAC class dynamin-like GTPase superfamily. GB1/RHD3 GTPase family. RHD3 subfamily.

It is found in the endoplasmic reticulum membrane. Its function is as follows. Cooperates with the reticulon proteins and tubule-shaping DP1 family proteins to generate and maintain the structure of the tubular endoplasmic reticulum network. Has GTPase activity, which is required for its function in ER organization. This Paracoccidioides brasiliensis (strain Pb03) protein is Protein SEY1.